The sequence spans 715 residues: MEQQYRTYDFELAGRKLTLEFGKMAKQAHGSVLVRYGDTAILSAVTVSKEPKPLDFFPLTVNYEERLYAVGKIPGGFIKREGRPSEKAILASRLIDRPVRPLFAEGFRNDVQIVNTVLSVDQDCSPEIAAMIGTSAALCVSEIPFEGPIAGVIVGRIDGEFVINPTVAQAEKSDIHLTVAGTHKAINMVEAAANQVPEAIMLEAIMAGHDVIKQLVEFQNMIVSEIGKQKMEVILHEVDPEIDQAVRAYAEARLKEAVRIEEKQARYDAIDDIKAETKEHFAAKDAEAYPEQEKMISEVLGNIVKDEVRRLITDEKVRPDGRALNEIRPLSSETTILSRTHGSAMFTRGQTQALSVCTLGALGDVQILDGLGLEESKRFMHHYNFPPYSVGEARPLRPPGRREIGHGALGERAIEPIIPSEVEFPYTIRLVSEVIESNGSTSQASICASVLALMDAGVPIKAPVAGIAMGLIMSKDEKSFSILTDIQGMEDHLGDMDFKVAGTEAGVTAIQMDIKISGINREILELALEQARVGRLHILNHMMSTISEPRKELSPYAPKIMTMTINPEKIRDVIGPQGRVINKIIEETGVKIDIEQDGRVFIASINHEANLRAKQIIEDLVREVAVGQVYLGTVKRVEKYGAFIELFAGKEGLCHISQLAEERVAKTEDVVAVGDKVQVKVTEIDDQGRVNLSRKAVLKEQAAAEQAAETPTKAE.

Mg(2+) contacts are provided by aspartate 491 and aspartate 497. A KH domain is found at 558 to 617 (PKIMTMTINPEKIRDVIGPQGRVINKIIEETGVKIDIEQDGRVFIASINHEANLRAKQII). The S1 motif domain occupies 627 to 695 (GQVYLGTVKR…DQGRVNLSRK (69 aa)).

It belongs to the polyribonucleotide nucleotidyltransferase family. Mg(2+) is required as a cofactor.

The protein resides in the cytoplasm. It catalyses the reaction RNA(n+1) + phosphate = RNA(n) + a ribonucleoside 5'-diphosphate. Involved in mRNA degradation. Catalyzes the phosphorolysis of single-stranded polyribonucleotides processively in the 3'- to 5'-direction. This Brevibacillus brevis (strain 47 / JCM 6285 / NBRC 100599) protein is Polyribonucleotide nucleotidyltransferase.